A 202-amino-acid polypeptide reads, in one-letter code: MFITFEGIDGSGKTTQSHLLAEYLSEIYGVNNVVLTREPGGTLLNESVRNLLFKAQGLDSLSELLFFIAMRREHFVKIIKPSLMQKKIVICDRFIDSTIAYQGYGQGIDCSLIDQLNDLVIDVYPDITFIIDVDINESLSRSCKNGYEFADMEFYYRVRDGFYDIAKKNPHRCHVITDKSETYDIDDINFVHLEVIKVLQMV.

7–14 (GIDGSGKT) is a binding site for ATP.

Belongs to the thymidylate kinase family.

It carries out the reaction dTMP + ATP = dTDP + ADP. Phosphorylation of dTMP to form dTDP in both de novo and salvage pathways of dTTP synthesis. This is Thymidylate kinase from Ehrlichia chaffeensis (strain ATCC CRL-10679 / Arkansas).